We begin with the raw amino-acid sequence, 342 residues long: MPVPCGSSCGRNAFMRRPKTGDTLCKECFFLAFETEIHNTIQQEQLFRPGEKVAIAASGGKDSTVLAHVMNLLNKRYNYGLDLVLLSIDEGITGYRDDSLKTVAQNRDDYGMPLRVLSYQELYGWTMDRIVAEIGRSNNCTFCGVFRRQALDRGARLMEVDCVATGHNADDIAETVIMNILRGDTARLRRCCDIKTGSKEADTIPRVKPLKYSYEKEIVMYAHFKKLVYFSTECVFAPNAYRGHARAFLKDLEKVRPSAIMDIIHAGEQLQIKGTVKKPVRGVCGRCGFVSSQQPCKACVLLEGLNRGLPKLGIGKKSKGERMVALQEQQLREKAHLVKNDF.

This sequence belongs to the TtcA family. CTU1/NCS6/ATPBD3 subfamily.

Its subcellular location is the cytoplasm. It functions in the pathway tRNA modification; 5-methoxycarbonylmethyl-2-thiouridine-tRNA biosynthesis. Functionally, plays a central role in 2-thiolation of mcm(5)S(2)U at tRNA wobble positions of tRNA(Lys), tRNA(Glu) and tRNA(Gln). Directly binds tRNAs and probably acts by catalyzing adenylation of tRNAs, an intermediate required for 2-thiolation. It is unclear whether it acts as a sulfurtransferase that transfers sulfur from thiocarboxylated URM1 onto the uridine of tRNAs at wobble position. The polypeptide is Cytoplasmic tRNA 2-thiolation protein 1 (Anopheles gambiae (African malaria mosquito)).